Reading from the N-terminus, the 117-residue chain is MNNIIKMLNDEQMKTDVPDFGAGDTVVVQVRVKEGEKERLQAFEGLVIAKRNRGLHSAFTVRKISNGEGVERAFQTHSPLIASIEVKRRGRVRRAKLYYLRERSGKSARIREKLATK.

Belongs to the bacterial ribosomal protein bL19 family.

This protein is located at the 30S-50S ribosomal subunit interface and may play a role in the structure and function of the aminoacyl-tRNA binding site. This is Large ribosomal subunit protein bL19 from Shewanella frigidimarina (strain NCIMB 400).